The primary structure comprises 20 residues: 23 kDa cell wall protein (20 aa).

Its subcellular location is the secreted. The protein localises to the cell wall. This Arabidopsis thaliana (Mouse-ear cress) protein is 23 kDa cell wall protein.